We begin with the raw amino-acid sequence, 274 residues long: Ribosomal RNA small subunit methyltransferase A (274 aa).

Residues N27, L29, G54, E75, D100, and N121 each contribute to the S-adenosyl-L-methionine site.

The protein belongs to the class I-like SAM-binding methyltransferase superfamily. rRNA adenine N(6)-methyltransferase family. RsmA subfamily.

It localises to the cytoplasm. It carries out the reaction adenosine(1518)/adenosine(1519) in 16S rRNA + 4 S-adenosyl-L-methionine = N(6)-dimethyladenosine(1518)/N(6)-dimethyladenosine(1519) in 16S rRNA + 4 S-adenosyl-L-homocysteine + 4 H(+). Specifically dimethylates two adjacent adenosines (A1518 and A1519) in the loop of a conserved hairpin near the 3'-end of 16S rRNA in the 30S particle. May play a critical role in biogenesis of 30S subunits. The sequence is that of Ribosomal RNA small subunit methyltransferase A from Acinetobacter baylyi (strain ATCC 33305 / BD413 / ADP1).